The primary structure comprises 573 residues: Dihydroxy-acid dehydratase (573 aa).

Residue cysteine 62 participates in [2Fe-2S] cluster binding. Residue aspartate 94 coordinates Mg(2+). Cysteine 135 is a [2Fe-2S] cluster binding site. Residues aspartate 136 and lysine 137 each coordinate Mg(2+). Lysine 137 is modified (N6-carboxylysine). Position 212 (cysteine 212) interacts with [2Fe-2S] cluster. Residue glutamate 463 participates in Mg(2+) binding. The active-site Proton acceptor is serine 489.

It belongs to the IlvD/Edd family. In terms of assembly, homodimer. It depends on [2Fe-2S] cluster as a cofactor. The cofactor is Mg(2+).

It carries out the reaction (2R)-2,3-dihydroxy-3-methylbutanoate = 3-methyl-2-oxobutanoate + H2O. The catalysed reaction is (2R,3R)-2,3-dihydroxy-3-methylpentanoate = (S)-3-methyl-2-oxopentanoate + H2O. It participates in amino-acid biosynthesis; L-isoleucine biosynthesis; L-isoleucine from 2-oxobutanoate: step 3/4. It functions in the pathway amino-acid biosynthesis; L-valine biosynthesis; L-valine from pyruvate: step 3/4. In terms of biological role, functions in the biosynthesis of branched-chain amino acids. Catalyzes the dehydration of (2R,3R)-2,3-dihydroxy-3-methylpentanoate (2,3-dihydroxy-3-methylvalerate) into 2-oxo-3-methylpentanoate (2-oxo-3-methylvalerate) and of (2R)-2,3-dihydroxy-3-methylbutanoate (2,3-dihydroxyisovalerate) into 2-oxo-3-methylbutanoate (2-oxoisovalerate), the penultimate precursor to L-isoleucine and L-valine, respectively. In Renibacterium salmoninarum (strain ATCC 33209 / DSM 20767 / JCM 11484 / NBRC 15589 / NCIMB 2235), this protein is Dihydroxy-acid dehydratase.